Reading from the N-terminus, the 490-residue chain is Cytochrome P450 90D2 (490 aa).

The helical transmembrane segment at 4–24 (AAAGWAAPAFAVAAVVIWVVL) threads the bilayer. Cysteine 437 provides a ligand contact to heme.

This sequence belongs to the cytochrome P450 family. Heme is required as a cofactor. As to expression, expressed at low levels leaf blades, shoot apex and elongating stem.

It localises to the membrane. The catalysed reaction is 6-deoxoteasterone + reduced [NADPH--hemoprotein reductase] + O2 = 3-dehydro-6-deoxoteasterone + oxidized [NADPH--hemoprotein reductase] + 2 H2O + H(+). It functions in the pathway plant hormone biosynthesis; brassinosteroid biosynthesis. Catalyzes the C6-oxidation step in brassinosteroids biosynthesis. May convert 6-deoxoteasterone (6-deoxoTE) to 3-dehydro-6-deoxoteasterone (6-deoxo3DT, 6-deoxo3DHT), and teasterone (TE) to 3-dehydroteasterone (3DT, 3-DHT). Involved in the elongation of leaf sheaths and stems. The polypeptide is Cytochrome P450 90D2 (Oryza sativa subsp. japonica (Rice)).